We begin with the raw amino-acid sequence, 231 residues long: MNEITTWRHVFKLDPNKEITDEQLEQVCESGTDAIIVGGTDGVTLENVIDLLARVRRFSVPCALEVSDIEAITPGFDYYFIPMVLNSRDLTWLIDLHHEAVKQFGDLINWEELFVEGYCILNDECKAASLTSARTNVTEEDVIAYARMAEHMYHFPIFYMEYSGRYGDVALVEKVKRTLERTRLFYGGGIHTPEQAKEMAMWADTVVVGNAIYTNLQMALQTVEAVKGKSA.

Lys-12 lines the sn-glycerol 1-phosphate pocket. The Mg(2+) site is built by Asp-14 and Thr-40. Sn-glycerol 1-phosphate contacts are provided by residues 159 to 164 (YMEYSG), Gly-189, and 209 to 210 (GN).

This sequence belongs to the GGGP/HepGP synthase family. Group I subfamily. In terms of assembly, homodimer. Mg(2+) serves as cofactor.

The enzyme catalyses sn-glycerol 1-phosphate + all-trans-heptaprenyl diphosphate = 3-heptaprenyl-sn-glycero-1-phosphate + diphosphate. The protein operates within membrane lipid metabolism; glycerophospholipid metabolism. Its function is as follows. Prenyltransferase that catalyzes in vivo the transfer of the heptaprenyl moiety of heptaprenyl pyrophosphate (HepPP; 35 carbon atoms) to the C3 hydroxyl of sn-glycerol-1-phosphate (G1P), producing heptaprenylglyceryl phosphate (HepGP). This reaction is an ether-bond-formation step in the biosynthesis of archaea-type G1P-based membrane lipids found in Bacillales. This chain is Heptaprenylglyceryl phosphate synthase, found in Anoxybacillus flavithermus (strain DSM 21510 / WK1).